The following is a 387-amino-acid chain: 3-ketoacyl-CoA thiolase (387 aa).

The Acyl-thioester intermediate role is filled by cysteine 91. Active-site proton acceptor residues include histidine 343 and cysteine 373.

The protein belongs to the thiolase-like superfamily. Thiolase family. As to quaternary structure, heterotetramer of two alpha chains (FadB) and two beta chains (FadA).

The protein resides in the cytoplasm. It catalyses the reaction an acyl-CoA + acetyl-CoA = a 3-oxoacyl-CoA + CoA. It functions in the pathway lipid metabolism; fatty acid beta-oxidation. In terms of biological role, catalyzes the final step of fatty acid oxidation in which acetyl-CoA is released and the CoA ester of a fatty acid two carbons shorter is formed. The chain is 3-ketoacyl-CoA thiolase from Aliivibrio fischeri (strain ATCC 700601 / ES114) (Vibrio fischeri).